The sequence spans 153 residues: Cornifin-B (153 aa).

Disordered regions lie at residues 1–35 and 49–85; these read MSSHQQKQPCTAPPQLHEQQVKQPCQPPPPEPCVS and CHPKAPEPCHPKAPEPCHPKAPEPCHPKAPEPCHPKA. Repeat copies occupy residues 27–34, 35–42, 43–50, 51–58, 59–66, 67–74, 75–82, 83–90, 91–98, 99–106, 107–114, 115–122, 123–130, and 131–138. The 14 X 8 AA approximate tandem repeats stretch occupies residues 27-138; that stretch reads PPPPEPCVSQ…CQPIVPEPCP (112 aa).

It belongs to the cornifin (SPRR) family. As to expression, expressed in fetal periderm, hair follicles and in the thickened epidermis of the lip and footpad. Also present in the epithelia of various tissues such as the penis, vagina, forestomach, tongue and esophagus.

It localises to the cytoplasm. In terms of biological role, cross-linked envelope protein of keratinocytes. It is a keratinocyte protein that first appears in the cell cytosol, but ultimately becomes cross-linked to membrane proteins by transglutaminase. All that results in the formation of an insoluble envelope beneath the plasma membrane. The sequence is that of Cornifin-B (Sprr1b) from Mus musculus (Mouse).